Here is a 361-residue protein sequence, read N- to C-terminus: Alanine racemase (361 aa).

The active-site Proton acceptor; specific for D-alanine is Lys-35. Lys-35 is subject to N6-(pyridoxal phosphate)lysine. A substrate-binding site is contributed by Arg-130. The active-site Proton acceptor; specific for L-alanine is Tyr-257. Met-305 provides a ligand contact to substrate.

The protein belongs to the alanine racemase family. Requires pyridoxal 5'-phosphate as cofactor.

The catalysed reaction is L-alanine = D-alanine. The protein operates within amino-acid biosynthesis; D-alanine biosynthesis; D-alanine from L-alanine: step 1/1. Functionally, catalyzes the interconversion of L-alanine and D-alanine. May also act on other amino acids. The protein is Alanine racemase (alr) of Nitrosomonas eutropha (strain DSM 101675 / C91 / Nm57).